A 391-amino-acid polypeptide reads, in one-letter code: Tryptophan synthase beta chain (391 aa).

The residue at position 84 (lysine 84) is an N6-(pyridoxal phosphate)lysine.

It belongs to the TrpB family. In terms of assembly, tetramer of two alpha and two beta chains. Pyridoxal 5'-phosphate serves as cofactor.

The catalysed reaction is (1S,2R)-1-C-(indol-3-yl)glycerol 3-phosphate + L-serine = D-glyceraldehyde 3-phosphate + L-tryptophan + H2O. It functions in the pathway amino-acid biosynthesis; L-tryptophan biosynthesis; L-tryptophan from chorismate: step 5/5. In terms of biological role, the beta subunit is responsible for the synthesis of L-tryptophan from indole and L-serine. The polypeptide is Tryptophan synthase beta chain (Caldanaerobacter subterraneus subsp. tengcongensis (strain DSM 15242 / JCM 11007 / NBRC 100824 / MB4) (Thermoanaerobacter tengcongensis)).